Here is a 388-residue protein sequence, read N- to C-terminus: UPF0496 protein 1 (388 aa).

The tract at residues 1 to 25 is disordered; sequence MGNSSSSGSHRPPRPASSESALPPA. A coiled-coil region spans residues 198–227; the sequence is QAVYRQQLTMLEKLQQRKHRLDKKVRAIKA. The next 2 helical transmembrane spans lie at 234 to 254 and 257 to 277; these read IIFATTFAAVLICSVVAAAIA and PVAAALAAAASIPVGSMGKWI. Residues 344–376 adopt a coiled-coil conformation; the sequence is VEEIKKKLEVFMKSVEDLGEQADRCSRDIRRAR.

This sequence belongs to the UPF0496 family.

The protein resides in the membrane. This Oryza sativa subsp. japonica (Rice) protein is UPF0496 protein 1.